Consider the following 106-residue polypeptide: uncharacterized protein (106 aa).

Helical transmembrane passes span 5–27 (IFVI…GIII), 42–64 (AVAA…LAYM), and 76–98 (LPYI…TNFF).

Its subcellular location is the cell membrane. This is an uncharacterized protein from Archaeoglobus fulgidus (strain ATCC 49558 / DSM 4304 / JCM 9628 / NBRC 100126 / VC-16).